A 344-amino-acid polypeptide reads, in one-letter code: Phosphoribosylformylglycinamidine cyclo-ligase (344 aa).

The protein belongs to the AIR synthase family.

It is found in the cytoplasm. The catalysed reaction is 2-formamido-N(1)-(5-O-phospho-beta-D-ribosyl)acetamidine + ATP = 5-amino-1-(5-phospho-beta-D-ribosyl)imidazole + ADP + phosphate + H(+). Its pathway is purine metabolism; IMP biosynthesis via de novo pathway; 5-amino-1-(5-phospho-D-ribosyl)imidazole from N(2)-formyl-N(1)-(5-phospho-D-ribosyl)glycinamide: step 2/2. The sequence is that of Phosphoribosylformylglycinamidine cyclo-ligase from Neisseria gonorrhoeae (strain ATCC 700825 / FA 1090).